The following is a 1800-amino-acid chain: U3 small nucleolar RNA-associated protein 10 (1800 aa).

HEAT repeat units follow at residues 426–467 (FTQS…TTPA) and 581–619 (DVDL…LYKK). Transmembrane regions (helical) follow at residues 944–964 (IQSG…AIVN) and 1000–1020 (ALLL…HSVM). HEAT repeat units follow at residues 1043–1081 (DQTI…AFEH), 1250–1288 (TLSL…QNPE), 1294–1333 (QHRM…KYGR), and 1755–1793 (LALL…VLGE).

It belongs to the HEATR1/UTP10 family. As to quaternary structure, component of the ribosomal small subunit (SSU) processome.

It is found in the nucleus. Its subcellular location is the nucleolus. The protein resides in the membrane. In terms of biological role, involved in nucleolar processing of pre-18S ribosomal RNA. Involved in ribosome biosynthesis. This chain is U3 small nucleolar RNA-associated protein 10, found in Aspergillus niger (strain ATCC MYA-4892 / CBS 513.88 / FGSC A1513).